The primary structure comprises 69 residues: UPF0150 protein ssr1258 (69 aa).

Belongs to the UPF0150 family.

This Synechocystis sp. (strain ATCC 27184 / PCC 6803 / Kazusa) protein is UPF0150 protein ssr1258.